The following is a 348-amino-acid chain: Phenylalanine--tRNA ligase alpha subunit (348 aa).

Mg(2+) is bound at residue E259.

It belongs to the class-II aminoacyl-tRNA synthetase family. Phe-tRNA synthetase alpha subunit type 1 subfamily. As to quaternary structure, tetramer of two alpha and two beta subunits. Mg(2+) is required as a cofactor.

It localises to the cytoplasm. It catalyses the reaction tRNA(Phe) + L-phenylalanine + ATP = L-phenylalanyl-tRNA(Phe) + AMP + diphosphate + H(+). The polypeptide is Phenylalanine--tRNA ligase alpha subunit (Limosilactobacillus reuteri (strain DSM 20016) (Lactobacillus reuteri)).